The primary structure comprises 659 residues: Protein real-time (659 aa).

The region spanning 3–175 (QKFQSPVRVY…FIGQLREEGI (173 aa)) is the PRELI/MSF1 domain. One can recognise a CRAL-TRIO domain in the interval 286–462 (KPAVVVEHFP…FLGGPCKTMI (177 aa)). At Ser477 the chain carries Phosphoserine. Residues 512–631 (HRNLYKSVDL…QLNVFYEVLS (120 aa)) form the GOLD domain.

In terms of tissue distribution, restricted to the developing gut and central nervous system (CNS).

The protein resides in the mitochondrion. In Drosophila melanogaster (Fruit fly), this protein is Protein real-time (retm).